A 243-amino-acid chain; its full sequence is Transcription factor TFIIS homolog (243 aa).

Positions 77-201 constitute a TFIIS central domain; it reads MRDIIQMMFF…SQQKVAEKTS (125 aa). Residues 202–242 form a TFIIS-type zinc finger; sequence QLYKCPNCKQRMCTYREVQTRALDEPSTIFCTCKKCGHEFI. Zn(2+)-binding residues include C206, C209, C234, and C237.

It belongs to the TFS-II family.

Functionally, putative initiation factor. Necessary for efficient transcription elongation past template-encoded arresting sites. In Ornithodoros (relapsing fever ticks), this protein is Transcription factor TFIIS homolog.